We begin with the raw amino-acid sequence, 198 residues long: DnaJ homolog subfamily C member 12 (198 aa).

An N-acetylmethionine modification is found at methionine 1. In terms of domain architecture, J spans 14–79 (DYYALLGCDE…ESRARYDHWR (66 aa)). The segment at 114 to 177 (EGSGQTFTSS…GLSDLNCGHL (64 aa)) is disordered. The segment covering 116-125 (SGQTFTSSVP) has biased composition (polar residues). A compositionally biased stretch (basic and acidic residues) spans 126–156 (NKERSEQRETKKGDPDSNPEKMKQKEPKFPE). Phosphoserine is present on residues serine 160, serine 166, and serine 182.

As to quaternary structure, interacts with HSPA8. Interacts with TPH1. Interacts with TPH2. In terms of tissue distribution, highest levels of expression are detected in kidney, pineal gland, and raphe nuclei in the brain where it localizes to serotonerigic neurons.

Its subcellular location is the cytoplasm. In terms of biological role, probable co-chaperone that participates in the proper folding of biopterin-dependent aromatic amino acid hydroxylases, which include phenylalanine-4-hydroxylase (PAH), tyrosine 3-monooxygenase (TH) and peripheral and neuronal tryptophan hydroxylases (TPH1 and TPH2). The chain is DnaJ homolog subfamily C member 12 (Dnajc12) from Mus musculus (Mouse).